A 267-amino-acid polypeptide reads, in one-letter code: Thiamine pyrophosphokinase 2 (267 aa).

The protein belongs to the thiamine pyrophosphokinase family.

The protein resides in the cytoplasm. Its subcellular location is the cytosol. It catalyses the reaction thiamine + ATP = thiamine diphosphate + AMP + H(+). It functions in the pathway cofactor biosynthesis; thiamine diphosphate biosynthesis; thiamine diphosphate from thiamine: step 1/1. Catalyzes the phosphorylation of thiamine to thiamine pyrophosphate (TPP). TPP is an active cofactor for enzymes involved in glycolysis and energy production. Plant leaves require high levels of TPP for photosynthesis and carbohydrate metabolism. The polypeptide is Thiamine pyrophosphokinase 2 (TPK2) (Oryza sativa subsp. japonica (Rice)).